The sequence spans 401 residues: Dual-specificity RNA methyltransferase RlmN (401 aa).

The active-site Proton acceptor is the glutamate 114. Positions 120–365 (DKGRGTLCVS…TMVRRTRGDD (246 aa)) constitute a Radical SAM core domain. An intrachain disulfide couples cysteine 127 to cysteine 370. [4Fe-4S] cluster-binding residues include cysteine 134, cysteine 138, and cysteine 141. S-adenosyl-L-methionine contacts are provided by residues 187-188 (GE), serine 219, 241-243 (SLH), and asparagine 327. The S-methylcysteine intermediate role is filled by cysteine 370.

This sequence belongs to the radical SAM superfamily. RlmN family. The cofactor is [4Fe-4S] cluster.

It localises to the cytoplasm. The catalysed reaction is adenosine(2503) in 23S rRNA + 2 reduced [2Fe-2S]-[ferredoxin] + 2 S-adenosyl-L-methionine = 2-methyladenosine(2503) in 23S rRNA + 5'-deoxyadenosine + L-methionine + 2 oxidized [2Fe-2S]-[ferredoxin] + S-adenosyl-L-homocysteine. It catalyses the reaction adenosine(37) in tRNA + 2 reduced [2Fe-2S]-[ferredoxin] + 2 S-adenosyl-L-methionine = 2-methyladenosine(37) in tRNA + 5'-deoxyadenosine + L-methionine + 2 oxidized [2Fe-2S]-[ferredoxin] + S-adenosyl-L-homocysteine. In terms of biological role, specifically methylates position 2 of adenine 2503 in 23S rRNA and position 2 of adenine 37 in tRNAs. m2A2503 modification seems to play a crucial role in the proofreading step occurring at the peptidyl transferase center and thus would serve to optimize ribosomal fidelity. This Xanthomonas campestris pv. campestris (strain 8004) protein is Dual-specificity RNA methyltransferase RlmN.